Consider the following 226-residue polypeptide: Endonuclease NucS (226 aa).

This sequence belongs to the NucS endonuclease family.

It localises to the cytoplasm. Functionally, cleaves both 3' and 5' ssDNA extremities of branched DNA structures. This is Endonuclease NucS from Mycobacterium ulcerans (strain Agy99).